Consider the following 150-residue polypeptide: Regulatory protein RecX (150 aa).

Belongs to the RecX family.

The protein resides in the cytoplasm. Its function is as follows. Modulates RecA activity. This chain is Regulatory protein RecX, found in Legionella pneumophila (strain Corby).